The primary structure comprises 255 residues: 5'-nucleotidase SurE (255 aa).

Residues D8, D9, S39, and N95 each contribute to the a divalent metal cation site.

Belongs to the SurE nucleotidase family. The cofactor is a divalent metal cation.

It is found in the cytoplasm. It catalyses the reaction a ribonucleoside 5'-phosphate + H2O = a ribonucleoside + phosphate. Nucleotidase that shows phosphatase activity on nucleoside 5'-monophosphates. This Thermosipho melanesiensis (strain DSM 12029 / CIP 104789 / BI429) protein is 5'-nucleotidase SurE.